Here is a 577-residue protein sequence, read N- to C-terminus: Protein NUCLEOLAR COMPLEX ASSOCIATED 4 (577 aa).

Residues 230 to 263 are disordered; that stretch reads PEKQAEKSQHEMWSGSDESISEKPTDKKKKTEKG. 3 helical membrane passes run 329–349, 350–370, and 404–424; these read IGGVVSVMALSSLFILMTQHG, LEYPFFYEKLYALLVPSVFVA, and LSLSIPPAGSLVITALIYNLL.

This sequence belongs to the CBF/MAK21 family. In terms of assembly, component of the ribosomal small subunit (SSU) processome composed of at least 40 protein subunits and snoRNA U3. In terms of tissue distribution, mostly expressed in flowers and stems and at lower levels in roots, hypocotyls, siliques, leaves and seeds.

Its subcellular location is the nucleus membrane. It is found in the nucleus. The protein localises to the nucleolus. Functionally, essential protein required during embryogenesis. Involved in nucleolar processing of ribosomal RNA (rRNA) 40S and 90S ribosomal subunits and ribosome assembly; early in ribosome biogenesis, especially required during the maturation of 5.8S rRNA. Has a role in the nuclear export of 40S pre-ribosomal subunit to the cytoplasm. The protein is Protein NUCLEOLAR COMPLEX ASSOCIATED 4 of Arabidopsis thaliana (Mouse-ear cress).